The sequence spans 213 residues: Pyridoxine/pyridoxamine 5'-phosphate oxidase (213 aa).

Substrate is bound by residues 8–11 (RQEY) and Lys66. FMN contacts are provided by residues 61-66 (RTVLLK), 76-77 (YT), Arg82, Lys83, and Gln105. Substrate is bound by residues Tyr123, Arg127, and Ser131. FMN is bound by residues 140–141 (QS) and Trp185. 191–193 (RLH) provides a ligand contact to substrate. Position 195 (Arg195) interacts with FMN.

It belongs to the pyridoxamine 5'-phosphate oxidase family. As to quaternary structure, homodimer. FMN is required as a cofactor.

It carries out the reaction pyridoxamine 5'-phosphate + O2 + H2O = pyridoxal 5'-phosphate + H2O2 + NH4(+). It catalyses the reaction pyridoxine 5'-phosphate + O2 = pyridoxal 5'-phosphate + H2O2. It participates in cofactor metabolism; pyridoxal 5'-phosphate salvage; pyridoxal 5'-phosphate from pyridoxamine 5'-phosphate: step 1/1. Its pathway is cofactor metabolism; pyridoxal 5'-phosphate salvage; pyridoxal 5'-phosphate from pyridoxine 5'-phosphate: step 1/1. In terms of biological role, catalyzes the oxidation of either pyridoxine 5'-phosphate (PNP) or pyridoxamine 5'-phosphate (PMP) into pyridoxal 5'-phosphate (PLP). The polypeptide is Pyridoxine/pyridoxamine 5'-phosphate oxidase (Bacteroides thetaiotaomicron (strain ATCC 29148 / DSM 2079 / JCM 5827 / CCUG 10774 / NCTC 10582 / VPI-5482 / E50)).